A 298-amino-acid polypeptide reads, in one-letter code: Bifunctional protein FolD (298 aa).

NADP(+) is bound by residues 165–167 (GRS), Ser190, and Ile231.

It belongs to the tetrahydrofolate dehydrogenase/cyclohydrolase family. Homodimer.

It carries out the reaction (6R)-5,10-methylene-5,6,7,8-tetrahydrofolate + NADP(+) = (6R)-5,10-methenyltetrahydrofolate + NADPH. The enzyme catalyses (6R)-5,10-methenyltetrahydrofolate + H2O = (6R)-10-formyltetrahydrofolate + H(+). It participates in one-carbon metabolism; tetrahydrofolate interconversion. Catalyzes the oxidation of 5,10-methylenetetrahydrofolate to 5,10-methenyltetrahydrofolate and then the hydrolysis of 5,10-methenyltetrahydrofolate to 10-formyltetrahydrofolate. The protein is Bifunctional protein FolD of Prochlorococcus marinus (strain MIT 9515).